The following is a 784-amino-acid chain: Armadillo repeat-containing X-linked protein 2 (784 aa).

The Mitochondrial intermembrane portion of the chain corresponds to 1-6; it reads MSRARD. 2 mitochondrion outer membrane (MOM)-targeting sequence regions span residues 1–6 and 26–40; these read MSRARD and KYTRGKDQKKKRLTK. A helical; Signal-anchor transmembrane segment spans residues 7 to 27; it reads AGCVAAGIVIGASAWYCVYKY. Topologically, residues 28–784 are cytoplasmic; the sequence is TRGKDQKKKR…VKVIKLVNKF (757 aa). Disordered stretches follow at residues 328-353, 388-461, and 488-522; these read TSGGAAVPSGGAATPRAAASTQRTAS, HSGA…ELGM, and PESEEGESGWTDTESDSDSEPDVPQRGKGKRTIPM. Over residues 396–418 the composition is skewed to low complexity; the sequence is GTSGSSKTAATGKKAAPGAHTGA. The segment covering 488–508 has biased composition (acidic residues); it reads PESEEGESGWTDTESDSDSEP. 3 ARM repeats span residues 528-568, 570-609, and 650-689; these read PYEI…NNAN, SCNQETIRKLGGLPIIANMINKTDPHIKEKALMAMNNLSE, and ITNDYQHLLVNSIANFFRLLSQGGGKIKVEILKILSNFAE.

The protein belongs to the eutherian X-chromosome-specific Armcx family. In terms of tissue distribution, widely expressed in the adult nervous tissue, especially in the forebrain, including the cerebral cortex, hippocampus and thalamus.

It is found in the mitochondrion. Its subcellular location is the mitochondrion outer membrane. Its function is as follows. May regulate the dynamics and distribution of mitochondria in neural cells. This chain is Armadillo repeat-containing X-linked protein 2 (Armcx2), found in Mus musculus (Mouse).